A 543-amino-acid polypeptide reads, in one-letter code: Adenosine deaminase 2 (543 aa).

The N-terminal stretch at 1-26 is a signal peptide; it reads MFLKFKNIFFIVLTLSIVFNGLIVNS. Residues 31-54 show a composition bias toward low complexity; sequence INNKNNNNNNNNKDLSSSESGSSS. Residues 31 to 58 form a disordered region; it reads INNKNNNNNNNNKDLSSSESGSSSDINP. N126 carries N-linked (GlcNAc...) asparagine glycosylation. Residues H144 and H146 each contribute to the Zn(2+) site. N179 is a glycosylation site (N-linked (GlcNAc...) asparagine). 232–239 contacts substrate; the sequence is WRKFDGIF. N309 and N326 each carry an N-linked (GlcNAc...) asparagine glycan. G355 contacts substrate. H389 contacts Zn(2+). E392 serves as the catalytic Proton donor. N397 is a glycosylation site (N-linked (GlcNAc...) asparagine). The active-site Proton acceptor is H414. A Zn(2+)-binding site is contributed by D471. D472 contributes to the substrate binding site. N-linked (GlcNAc...) asparagine glycosylation is found at N508 and N514.

It belongs to the metallo-dependent hydrolases superfamily. Adenosine and AMP deaminases family. ADGF subfamily. Zn(2+) serves as cofactor.

It is found in the secreted. The catalysed reaction is adenosine + H2O + H(+) = inosine + NH4(+). Adenosine deaminase that may contribute to the degradation of extracellular adenosine, a signaling molecule that controls a variety of cellular responses. May play a role in the regulation of cell proliferation. The sequence is that of Adenosine deaminase 2 from Dictyostelium discoideum (Social amoeba).